The primary structure comprises 364 residues: tRNA 2-selenouridine synthase (364 aa).

Residues 14-137 (LLADTPLIDV…LRQTAIQATW (124 aa)) form the Rhodanese domain. The active-site S-selanylcysteine intermediate is Cys-97.

The protein belongs to the SelU family. In terms of assembly, monomer.

The catalysed reaction is 5-methylaminomethyl-2-thiouridine(34) in tRNA + selenophosphate + (2E)-geranyl diphosphate + H2O + H(+) = 5-methylaminomethyl-2-selenouridine(34) in tRNA + (2E)-thiogeraniol + phosphate + diphosphate. It carries out the reaction 5-methylaminomethyl-2-thiouridine(34) in tRNA + (2E)-geranyl diphosphate = 5-methylaminomethyl-S-(2E)-geranyl-thiouridine(34) in tRNA + diphosphate. It catalyses the reaction 5-methylaminomethyl-S-(2E)-geranyl-thiouridine(34) in tRNA + selenophosphate + H(+) = 5-methylaminomethyl-2-(Se-phospho)selenouridine(34) in tRNA + (2E)-thiogeraniol. The enzyme catalyses 5-methylaminomethyl-2-(Se-phospho)selenouridine(34) in tRNA + H2O = 5-methylaminomethyl-2-selenouridine(34) in tRNA + phosphate. Involved in the post-transcriptional modification of the uridine at the wobble position (U34) of tRNA(Lys), tRNA(Glu) and tRNA(Gln). Catalyzes the conversion of 2-thiouridine (S2U-RNA) to 2-selenouridine (Se2U-RNA). Acts in a two-step process involving geranylation of 2-thiouridine (S2U) to S-geranyl-2-thiouridine (geS2U) and subsequent selenation of the latter derivative to 2-selenouridine (Se2U) in the tRNA chain. The polypeptide is tRNA 2-selenouridine synthase (Salmonella dublin (strain CT_02021853)).